We begin with the raw amino-acid sequence, 308 residues long: Elongation factor Ts (308 aa).

The interval 80-83 is involved in Mg(2+) ion dislocation from EF-Tu; that stretch reads TDFV.

It belongs to the EF-Ts family.

Its subcellular location is the cytoplasm. In terms of biological role, associates with the EF-Tu.GDP complex and induces the exchange of GDP to GTP. It remains bound to the aminoacyl-tRNA.EF-Tu.GTP complex up to the GTP hydrolysis stage on the ribosome. The polypeptide is Elongation factor Ts (Rhizobium etli (strain ATCC 51251 / DSM 11541 / JCM 21823 / NBRC 15573 / CFN 42)).